An 812-amino-acid polypeptide reads, in one-letter code: DNA replication licensing factor MCM3 (812 aa).

At Ala2 the chain carries N-acetylalanine. Residue Ser160 is modified to Phosphoserine. Residue Lys293 is modified to N6-acetyllysine. An MCM domain is found at 295 to 502 (VFEQLARSLA…QDREISDHVL (208 aa)). The ADP site is built by Gln353, Leu393, Glu394, Ala395, and Ala397. The Arginine finger signature appears at 477 to 480 (SRFD). Lys547 is modified (N6-acetyllysine). Position 611 is a phosphoserine (Ser611). Arg664 provides a ligand contact to ATP. Residues 664–744 (RKKASEDESD…TQDSQKVELS (81 aa)) are disordered. A phosphoserine mark is found at Ser668, Ser672, and Ser681. Over residues 670 to 681 (DESDLEDEEEKS) the composition is skewed to acidic residues. Position 705 is a phosphotyrosine (Tyr705). Position 708 is a phosphoserine (Ser708). Thr719, Thr722, and Thr729 each carry phosphothreonine. A compositionally biased stretch (basic and acidic residues) spans 720–744 (PKTDDSQEKTDDSQETQDSQKVELS). 2 positions are modified to phosphoserine: Ser732 and Ser738.

Belongs to the MCM family. Component of the MCM2-7 complex. The complex forms a toroidal hexameric ring with the proposed subunit order MCM2-MCM6-MCM4-MCM7-MCM3-MCM5. Component of the CMG helicase complex, a hexameric ring of related MCM2-7 subunits stabilized by CDC45 and the tetrameric GINS complex. Associated with the replication-specific DNA polymerase alpha. Interacts with MCMBP. Interacts with ANKRD17. Interacts with MCM3AP; this interaction leads to MCM3 acetylation. Post-translationally, acetylated by MCM3AP. O-glycosylated (O-GlcNAcylated), in a cell cycle-dependent manner.

The protein resides in the nucleus. It is found in the chromosome. It carries out the reaction ATP + H2O = ADP + phosphate + H(+). Its function is as follows. Acts as a component of the MCM2-7 complex (MCM complex) which is the replicative helicase essential for 'once per cell cycle' DNA replication initiation and elongation in eukaryotic cells. Core component of CDC45-MCM-GINS (CMG) helicase, the molecular machine that unwinds template DNA during replication, and around which the replisome is built. The active ATPase sites in the MCM2-7 ring are formed through the interaction surfaces of two neighboring subunits such that a critical structure of a conserved arginine finger motif is provided in trans relative to the ATP-binding site of the Walker A box of the adjacent subunit. The six ATPase active sites, however, are likely to contribute differentially to the complex helicase activity. Required for the entry in S phase and for cell division. This is DNA replication licensing factor MCM3 (Mcm3) from Mus musculus (Mouse).